The chain runs to 331 residues: Adenosine deaminase (331 aa).

Residues His12 and His14 each coordinate Zn(2+). Positions 14, 16, and 170 each coordinate substrate. Residue His197 coordinates Zn(2+). Glu200 functions as the Proton donor in the catalytic mechanism. Asp278 provides a ligand contact to Zn(2+).

Belongs to the metallo-dependent hydrolases superfamily. Adenosine and AMP deaminases family. Adenosine deaminase subfamily. Zn(2+) serves as cofactor.

It catalyses the reaction adenosine + H2O + H(+) = inosine + NH4(+). The catalysed reaction is 2'-deoxyadenosine + H2O + H(+) = 2'-deoxyinosine + NH4(+). Functionally, catalyzes the hydrolytic deamination of adenosine and 2-deoxyadenosine. The sequence is that of Adenosine deaminase from Clostridium botulinum (strain 657 / Type Ba4).